We begin with the raw amino-acid sequence, 567 residues long: Phosphoglucomutase-like protein 5 (567 aa).

Positions 1–26 are disordered; it reads MEGSPIPVLTVPTAPYEDQRPAGGGG. Position 120 is a phosphothreonine (T120). S122 carries the phosphoserine modification.

It belongs to the phosphohexose mutase family. As to quaternary structure, interacts with DMD/dystrophin; the interaction is direct. Interacts with UTRN/utrophin. In terms of tissue distribution, detected in smooth and cardiac muscle at high levels and in skeletal muscle at low level. Present in other tissues due to vascular or other smooth muscle component. Low levels are present in liver, kidney, skin and brain (at protein level).

It is found in the cell junction. The protein localises to the adherens junction. Its subcellular location is the cytoplasm. The protein resides in the cytoskeleton. It localises to the cell membrane. It is found in the sarcolemma. Functionally, component of adherens-type cell-cell and cell-matrix junctions. Has no phosphoglucomutase activity in vitro. The chain is Phosphoglucomutase-like protein 5 from Homo sapiens (Human).